A 130-amino-acid polypeptide reads, in one-letter code: Protein CPn_0713/CP_0033/CPj0713/CpB0740 (130 aa).

Belongs to the chlamydial CPn_0713/CT_663/TC_0034 family.

In Chlamydia pneumoniae (Chlamydophila pneumoniae), this protein is Protein CPn_0713/CP_0033/CPj0713/CpB0740.